A 479-amino-acid polypeptide reads, in one-letter code: Glutamate--tRNA ligase (479 aa).

The 'HIGH' region motif lies at 9–19 (PSPTGNLHIGT). The 'KMSKS' region motif lies at 243-247 (KLSKR). Lys-246 provides a ligand contact to ATP.

It belongs to the class-I aminoacyl-tRNA synthetase family. Glutamate--tRNA ligase type 1 subfamily. In terms of assembly, monomer.

It is found in the cytoplasm. It catalyses the reaction tRNA(Glu) + L-glutamate + ATP = L-glutamyl-tRNA(Glu) + AMP + diphosphate. In terms of biological role, catalyzes the attachment of glutamate to tRNA(Glu) in a two-step reaction: glutamate is first activated by ATP to form Glu-AMP and then transferred to the acceptor end of tRNA(Glu). This chain is Glutamate--tRNA ligase, found in Synechococcus sp. (strain JA-2-3B'a(2-13)) (Cyanobacteria bacterium Yellowstone B-Prime).